The following is a 498-amino-acid chain: PHD finger protein 10 (498 aa).

Over residues 1-10 (MAAAAGPGAA) the composition is skewed to low complexity. Residues 1–62 (MAAAAGPGAA…SSRSCETSSQ (62 aa)) are disordered. Position 2 is an N-acetylalanine (alanine 2). Residues serine 12, serine 36, and serine 50 each carry the phosphoserine modification. The tract at residues 89–185 (MLQEQVSEYL…HYKEYSQMQQ (97 aa)) is essential to induce neural progenitor proliferation. Residues 89-295 (MLQEQVSEYL…PPLDPELPAL (207 aa)) form an SAY region. Residue lysine 241 forms a Glycyl lysine isopeptide (Lys-Gly) (interchain with G-Cter in SUMO2) linkage. Serine 270 bears the Phosphoserine mark. A compositionally biased stretch (low complexity) spans 285-296 (EPPLDPELPALD). The segment at 285–368 (EPPLDPELPA…KRSVLSKSVP (84 aa)) is disordered. Residues 292–334 (LPALDSDGDSDDGEDGRGDEKRKNKGTSDSSSGNVSEGESPPD) are essential to induce neural progenitor proliferation. Phosphoserine occurs at positions 297, 301, 327, and 331. Over residues 318 to 328 (TSDSSSGNVSE) the composition is skewed to polar residues. The segment covering 345–359 (KSKDKAATPRKDGPK) has biased composition (basic and acidic residues). The PHD-type 1; degenerate zinc finger occupies 379–436 (ICGICLKGKESNKKGKAESLIHCSQCENSGHPSCLDMTMELVSMIKTYPWQCMECKTC). Residue lysine 385 forms a Glycyl lysine isopeptide (Lys-Gly) (interchain with G-Cter in SUMO2) linkage. The PHD-type 2; degenerate zinc finger occupies 438–481 (ICGQPHHEEEMMFCDMCDRGYHTFCVGLGAIPSGRWICDCCQRA).

Belongs to the SAYP family. As to quaternary structure, component of neural progenitors-specific chromatin remodeling complex (npBAF complex) composed of at least, ARID1A/BAF250A or ARID1B/BAF250B, SMARCD1/BAF60A, SMARCD3/BAF60C, SMARCA2/BRM/BAF190B, SMARCA4/BRG1/BAF190A, SMARCB1/BAF47, SMARCC1/BAF155, SMARCE1/BAF57, SMARCC2/BAF170, PHF10/BAF45A, ACTL6A/BAF53A and actin. Interacts with ACTL6A/BAF53A, SMARCA2/BRM/BAF190B, SMARCA4/BRG1/BAF190A and PBRM1/BAF180.

It is found in the nucleus. Its function is as follows. Involved in transcription activity regulation by chromatin remodeling. Belongs to the neural progenitors-specific chromatin remodeling complex (npBAF complex) and is required for the proliferation of neural progenitors. During neural development a switch from a stem/progenitor to a post-mitotic chromatin remodeling mechanism occurs as neurons exit the cell cycle and become committed to their adult state. The transition from proliferating neural stem/progenitor cells to post-mitotic neurons requires a switch in subunit composition of the npBAF and nBAF complexes. As neural progenitors exit mitosis and differentiate into neurons, npBAF complexes which contain ACTL6A/BAF53A and PHF10/BAF45A, are exchanged for homologous alternative ACTL6B/BAF53B and DPF1/BAF45B or DPF3/BAF45C subunits in neuron-specific complexes (nBAF). The npBAF complex is essential for the self-renewal/proliferative capacity of the multipotent neural stem cells. The nBAF complex along with CREST plays a role regulating the activity of genes essential for dendrite growth. The polypeptide is PHD finger protein 10 (PHF10) (Homo sapiens (Human)).